Here is an 81-residue protein sequence, read N- to C-terminus: Ferredoxin (81 aa).

In terms of domain architecture, 4Fe-4S ferredoxin-type spans Lys2–Asp30. Cys11, Cys14, Cys17, and Cys61 together coordinate [4Fe-4S] cluster.

[4Fe-4S] cluster is required as a cofactor.

Functionally, ferredoxins are iron-sulfur proteins that transfer electrons in a wide variety of metabolic reactions. The chain is Ferredoxin (fer) from Geobacillus stearothermophilus (Bacillus stearothermophilus).